The chain runs to 219 residues: ATP-dependent Clp protease proteolytic subunit (219 aa).

Catalysis depends on Ser101, which acts as the Nucleophile. His126 is a catalytic residue.

The protein belongs to the peptidase S14 family. In terms of assembly, component of the chloroplastic Clp protease core complex.

It localises to the plastid. Its subcellular location is the chloroplast stroma. The catalysed reaction is Hydrolysis of proteins to small peptides in the presence of ATP and magnesium. alpha-casein is the usual test substrate. In the absence of ATP, only oligopeptides shorter than five residues are hydrolyzed (such as succinyl-Leu-Tyr-|-NHMec, and Leu-Tyr-Leu-|-Tyr-Trp, in which cleavage of the -Tyr-|-Leu- and -Tyr-|-Trp bonds also occurs).. Cleaves peptides in various proteins in a process that requires ATP hydrolysis. Has a chymotrypsin-like activity. Plays a major role in the degradation of misfolded proteins. This is ATP-dependent Clp protease proteolytic subunit from Chara vulgaris (Common stonewort).